A 541-amino-acid polypeptide reads, in one-letter code: Metal transporter Nramp6 (541 aa).

The span at 1-18 shows a compositional bias: low complexity; that stretch reads MAPLPAAATATASSAATP. The disordered stretch occupies residues 1–44; that stretch reads MAPLPAAATATASSAATPADDEAHSLLPSTPSNEEDDDDLEERA. The next 12 helical transmembrane spans lie at 87 to 107, 120 to 140, 172 to 192, 196 to 216, 224 to 244, 270 to 290, 316 to 336, 358 to 378, 404 to 424, 436 to 456, 474 to 494, and 502 to 522; these read LWLF…PGNL, TLLW…LLAA, VAMV…IKIL, FLPL…FLSL, LEAV…WMFT, AVGV…SALV, IALA…AKGF, FGGG…AAGQ, IRSL…ALFF, WLNV…ITLV, VTWT…LDFF, and LSGS…LYLI.

It belongs to the NRAMP (TC 2.A.55) family.

The protein resides in the membrane. Functionally, probable metal transporter. The polypeptide is Metal transporter Nramp6 (NRAMP6) (Oryza sativa subsp. japonica (Rice)).